Reading from the N-terminus, the 403-residue chain is MPLKFRIKHTLDRMRVGKVKTRHGSFETPVFIPVATLAAIRGLDNRDLKDMGVEVILANTYHLHLRPGDELIKELGGLHKFMNFDGVIVTDSGGFQAFSLGFGMEHGVGKIANNIFLEELREERLREAENERKKLAVVTDRGVRFKDPKSGRIVELTPKKSMEIQSNLGSDIIFAFDECTSPLSDRDYTEKALERTHRWAEECLQHYDRRQALFGVVQGGEYRDLREKSARFMAERDFAGYGIGGSLGKSKQDMLNILDWVIPLLPEEKPRHLLGIGAIEDLFNCTEKGVDMYDCVAPARWARRGHLYVSPAEGGNVRNKFRIHIKNAAFRIDNRPVDRTCDCLVCQNYSRAYLRHLYKANELLYFRLATYHNIYFVVKLMERIRESIADGSFYELKREWLGF.

Residue D91 is the Proton acceptor of the active site. Substrate is bound by residues 91–95 (DSGGF), D177, Q218, and G245. The RNA binding stretch occupies residues 275 to 281 (GIGAIED). The active-site Nucleophile is the D294. Residues 299-303 (ARWAR) form an RNA binding; important for wobble base 34 recognition region. Positions 341, 343, 346, and 372 each coordinate Zn(2+).

Belongs to the queuine tRNA-ribosyltransferase family. In terms of assembly, homodimer. Within each dimer, one monomer is responsible for RNA recognition and catalysis, while the other monomer binds to the replacement base PreQ1. Zn(2+) serves as cofactor.

It catalyses the reaction 7-aminomethyl-7-carbaguanine + guanosine(34) in tRNA = 7-aminomethyl-7-carbaguanosine(34) in tRNA + guanine. Its function is as follows. Catalyzes the base-exchange of a guanine (G) residue with the queuine precursor 7-aminomethyl-7-deazaguanine (PreQ1) at position 34 (anticodon wobble position) in tRNAs with GU(N) anticodons (tRNA-Asp, -Asn, -His and -Tyr). Catalysis occurs through a double-displacement mechanism. The nucleophile active site attacks the C1' of nucleotide 34 to detach the guanine base from the RNA, forming a covalent enzyme-RNA intermediate. The proton acceptor active site deprotonates the incoming PreQ1, allowing a nucleophilic attack on the C1' of the ribose to form the product. After dissociation, two additional enzymatic reactions on the tRNA convert PreQ1 to queuine (Q), resulting in the hypermodified nucleoside queuosine (7-(((4,5-cis-dihydroxy-2-cyclopenten-1-yl)amino)methyl)-7-deazaguanosine). The sequence is that of Putative queuine tRNA-ribosyltransferase from Archaeoglobus fulgidus (strain ATCC 49558 / DSM 4304 / JCM 9628 / NBRC 100126 / VC-16).